The sequence spans 96 residues: Large ribosomal subunit protein bL27 (96 aa).

Positions 1–9 (MLRLDLQFF) are excised as a propeptide.

This sequence belongs to the bacterial ribosomal protein bL27 family. Post-translationally, the N-terminus is cleaved by ribosomal processing cysteine protease Prp.

This is Large ribosomal subunit protein bL27 from Geobacillus kaustophilus (strain HTA426).